Consider the following 271-residue polypeptide: 3-methyl-2-oxobutanoate hydroxymethyltransferase (271 aa).

The Mg(2+) site is built by Asp51 and Asp90. 3-methyl-2-oxobutanoate-binding positions include Asp51–Ser52, Asp90, and Lys119. Glu121 contacts Mg(2+). Glu188 serves as the catalytic Proton acceptor.

Belongs to the PanB family. As to quaternary structure, homodecamer; pentamer of dimers. It depends on Mg(2+) as a cofactor.

It localises to the cytoplasm. The enzyme catalyses 3-methyl-2-oxobutanoate + (6R)-5,10-methylene-5,6,7,8-tetrahydrofolate + H2O = 2-dehydropantoate + (6S)-5,6,7,8-tetrahydrofolate. It participates in cofactor biosynthesis; (R)-pantothenate biosynthesis; (R)-pantoate from 3-methyl-2-oxobutanoate: step 1/2. Functionally, catalyzes the reversible reaction in which hydroxymethyl group from 5,10-methylenetetrahydrofolate is transferred onto alpha-ketoisovalerate to form ketopantoate. The chain is 3-methyl-2-oxobutanoate hydroxymethyltransferase from Azoarcus sp. (strain BH72).